We begin with the raw amino-acid sequence, 334 residues long: Glycerol-3-phosphate dehydrogenase [NAD(P)+] (334 aa).

NADPH-binding residues include serine 14, tyrosine 15, histidine 35, and lysine 109. Sn-glycerol 3-phosphate contacts are provided by lysine 109, glycine 138, and threonine 140. Position 142 (alanine 142) interacts with NADPH. Residues lysine 194, aspartate 247, serine 257, arginine 258, and asparagine 259 each contribute to the sn-glycerol 3-phosphate site. Catalysis depends on lysine 194, which acts as the Proton acceptor. Arginine 258 serves as a coordination point for NADPH. Valine 282 and glutamate 284 together coordinate NADPH.

It belongs to the NAD-dependent glycerol-3-phosphate dehydrogenase family.

It is found in the cytoplasm. The catalysed reaction is sn-glycerol 3-phosphate + NAD(+) = dihydroxyacetone phosphate + NADH + H(+). It carries out the reaction sn-glycerol 3-phosphate + NADP(+) = dihydroxyacetone phosphate + NADPH + H(+). It participates in membrane lipid metabolism; glycerophospholipid metabolism. Catalyzes the reduction of the glycolytic intermediate dihydroxyacetone phosphate (DHAP) to sn-glycerol 3-phosphate (G3P), the key precursor for phospholipid synthesis. This is Glycerol-3-phosphate dehydrogenase [NAD(P)+] from Tolumonas auensis (strain DSM 9187 / NBRC 110442 / TA 4).